We begin with the raw amino-acid sequence, 449 residues long: Protein translocase subunit SecD (449 aa).

A run of 6 helical transmembrane segments spans residues 6–26 (GLVF…VLPT), 272–292 (LAVK…IAFY), 294–314 (LPGL…LALF), 317–337 (VPVT…GMAV), 379–399 (TFIA…GAPV), and 401–421 (GFAV…IFVT).

The protein belongs to the SecD/SecF family. SecD subfamily. In terms of assembly, forms a complex with SecF. Part of the essential Sec protein translocation apparatus which comprises SecA, SecYEG and auxiliary proteins SecDF. Other proteins may also be involved.

The protein localises to the cell membrane. In terms of biological role, part of the Sec protein translocase complex. Interacts with the SecYEG preprotein conducting channel. SecDF uses the proton motive force (PMF) to complete protein translocation after the ATP-dependent function of SecA. The sequence is that of Protein translocase subunit SecD from Dehalococcoides mccartyi (strain VS).